The primary structure comprises 315 residues: Homoserine kinase (315 aa).

97–107 (PPARGLGSSAT) serves as a coordination point for ATP.

It belongs to the GHMP kinase family. Homoserine kinase subfamily.

It localises to the cytoplasm. It carries out the reaction L-homoserine + ATP = O-phospho-L-homoserine + ADP + H(+). The protein operates within amino-acid biosynthesis; L-threonine biosynthesis; L-threonine from L-aspartate: step 4/5. In terms of biological role, catalyzes the ATP-dependent phosphorylation of L-homoserine to L-homoserine phosphate. This chain is Homoserine kinase, found in Synechococcus sp. (strain CC9605).